The sequence spans 631 residues: Anthrax toxin receptor-like (631 aa).

The signal sequence occupies residues 1 to 27 (MGSHESLGPYFLVFLLLLLLPPPLFRA). The Extracellular portion of the chain corresponds to 28–353 (GSLRYHGPDW…TSTTCGIFRN (326 aa)). The VWFA domain maps to 76 to 246 (DLYFILDKSG…KALRSTIDAL (171 aa)). The a divalent metal cation site is built by Ser84, Ser86, and Thr150. Residues 354–374 (WLYFVPLLLLVPLLLCCVWRL) form a helical membrane-spanning segment. Residues 375–631 (CRKQTVKEPP…LSLPPSEPNF (257 aa)) are Cytoplasmic-facing. The disordered stretch occupies residues 382–413 (EPPPVQKPEKEPEQEKPPSPPPPPPPPPPPLP). Over residues 388 to 397 (KPEKEPEQEK) the composition is skewed to basic and acidic residues. Over residues 398-413 (PPSPPPPPPPPPPPLP) the composition is skewed to pro residues.

The protein belongs to the ATR family.

It is found in the membrane. This Homo sapiens (Human) protein is Anthrax toxin receptor-like (ANTXRL).